A 638-amino-acid polypeptide reads, in one-letter code: Nucleolar protein 58 (638 aa).

In terms of domain architecture, Nop spans 284-402; that stretch reads IAPNLTILVG…VDRRAAAIEG (119 aa). The interval 416-638 is disordered; that stretch reads KSGNVAKYDH…EEKKSKKSKK (223 aa). Basic and acidic residues-rich tracts occupy residues 437-458, 485-521, 527-574, and 580-632; these read VATKSSKESSIKQEKQDVKMEE, KKEETPVAKEEKKEKKSKKEETPVAKEEKKEKEEKKE, EKKE…EKKD, and EKKE…EEKK.

Belongs to the NOP5/NOP56 family.

The protein resides in the nucleus. It localises to the nucleolus. In terms of biological role, involved in the biogenesis of box C/D snoRNAs. Part of the small subunit (SSU) processome, first precursor of the small eukaryotic ribosomal subunit. Could function in the small subunit (SSU) processome, first precursor of the small eukaryotic ribosomal subunit. During the assembly of the SSU processome in the nucleolus, many ribosome biogenesis factors, an RNA chaperone and ribosomal proteins associate with the nascent pre-rRNA and work in concert to generate RNA folding, modifications, rearrangements and cleavage as well as targeted degradation of pre-ribosomal RNA by the RNA exosome. As a component of box C/D small nucleolar ribonucleoprotein (snoRNP) complexes could function in methylation of ribosomal RNAs (rRNAs). The polypeptide is Nucleolar protein 58 (nop58) (Dictyostelium discoideum (Social amoeba)).